The following is a 347-amino-acid chain: NADH-ubiquinone oxidoreductase chain 2 (347 aa).

The next 10 helical transmembrane spans lie at tryptophan 26–methionine 46, phenylalanine 60–leucine 80, serine 96–proline 116, serine 123–tyrosine 143, isoleucine 151–asparagine 171, isoleucine 178–proline 198, leucine 200–methionine 220, methionine 240–phenylalanine 260, aspartate 274–methionine 294, and leucine 325–isoleucine 345.

The protein belongs to the complex I subunit 2 family. As to quaternary structure, core subunit of respiratory chain NADH dehydrogenase (Complex I) which is composed of 45 different subunits. Interacts with TMEM242.

The protein resides in the mitochondrion inner membrane. It carries out the reaction a ubiquinone + NADH + 5 H(+)(in) = a ubiquinol + NAD(+) + 4 H(+)(out). Its function is as follows. Core subunit of the mitochondrial membrane respiratory chain NADH dehydrogenase (Complex I) which catalyzes electron transfer from NADH through the respiratory chain, using ubiquinone as an electron acceptor. Essential for the catalytic activity and assembly of complex I. This is NADH-ubiquinone oxidoreductase chain 2 from Dugong dugon (Dugong).